Here is a 309-residue protein sequence, read N- to C-terminus: Homoserine kinase (309 aa).

Residue 91-101 coordinates ATP; that stretch reads PIGSGLGSSAC.

Belongs to the GHMP kinase family. Homoserine kinase subfamily.

The protein localises to the cytoplasm. It carries out the reaction L-homoserine + ATP = O-phospho-L-homoserine + ADP + H(+). It participates in amino-acid biosynthesis; L-threonine biosynthesis; L-threonine from L-aspartate: step 4/5. Its function is as follows. Catalyzes the ATP-dependent phosphorylation of L-homoserine to L-homoserine phosphate. In Buchnera aphidicola subsp. Acyrthosiphon pisum (strain 5A), this protein is Homoserine kinase.